The sequence spans 382 residues: Dual-specificity RNA methyltransferase RlmN (382 aa).

Glutamate 95 (proton acceptor) is an active-site residue. Residues glutamate 101–aspartate 348 enclose the Radical SAM core domain. Cysteine 108 and cysteine 353 are joined by a disulfide. Cysteine 115, cysteine 119, and cysteine 122 together coordinate [4Fe-4S] cluster. S-adenosyl-L-methionine-binding positions include glycine 179–glutamate 180, serine 211, serine 233–histidine 235, and asparagine 310. Residue cysteine 353 is the S-methylcysteine intermediate of the active site.

This sequence belongs to the radical SAM superfamily. RlmN family. The cofactor is [4Fe-4S] cluster.

The protein localises to the cytoplasm. The enzyme catalyses adenosine(2503) in 23S rRNA + 2 reduced [2Fe-2S]-[ferredoxin] + 2 S-adenosyl-L-methionine = 2-methyladenosine(2503) in 23S rRNA + 5'-deoxyadenosine + L-methionine + 2 oxidized [2Fe-2S]-[ferredoxin] + S-adenosyl-L-homocysteine. The catalysed reaction is adenosine(37) in tRNA + 2 reduced [2Fe-2S]-[ferredoxin] + 2 S-adenosyl-L-methionine = 2-methyladenosine(37) in tRNA + 5'-deoxyadenosine + L-methionine + 2 oxidized [2Fe-2S]-[ferredoxin] + S-adenosyl-L-homocysteine. In terms of biological role, specifically methylates position 2 of adenine 2503 in 23S rRNA and position 2 of adenine 37 in tRNAs. m2A2503 modification seems to play a crucial role in the proofreading step occurring at the peptidyl transferase center and thus would serve to optimize ribosomal fidelity. This chain is Dual-specificity RNA methyltransferase RlmN, found in Bordetella parapertussis (strain 12822 / ATCC BAA-587 / NCTC 13253).